The primary structure comprises 166 residues: Deglycase PYRAB04690 (166 aa).

Residues Met-1–Lys-166 enclose the PfpI endopeptidase domain. His-101 is an active-site residue.

The protein belongs to the peptidase C56 family. Homohexamer formed by a dimer of trimers that assemble into a hollow ring structure.

It is found in the cytoplasm. It carries out the reaction N(omega)-(1-hydroxy-2-oxopropyl)-L-arginyl-[protein] + H2O = lactate + L-arginyl-[protein] + H(+). The catalysed reaction is N(6)-(1-hydroxy-2-oxopropyl)-L-lysyl-[protein] + H2O = lactate + L-lysyl-[protein] + H(+). The enzyme catalyses S-(1-hydroxy-2-oxopropyl)-L-cysteinyl-[protein] + H2O = lactate + L-cysteinyl-[protein] + H(+). It catalyses the reaction N(omega)-(1-hydroxy-2-oxoethyl)-L-arginyl-[protein] + H2O = L-arginyl-[protein] + glycolate + H(+). It carries out the reaction N(6)-(1-hydroxy-2-oxoethyl)-L-lysyl-[protein] + H2O = glycolate + L-lysyl-[protein] + H(+). The catalysed reaction is S-(1-hydroxy-2-oxoethyl)-L-cysteinyl-[protein] + H2O = glycolate + L-cysteinyl-[protein] + H(+). Its function is as follows. Deglycase that catalyzes the deglycation of the Maillard adducts formed between amino groups of proteins and reactive carbonyl groups of glyoxals. Thus, functions as a protein deglycase that repairs methylglyoxal- and glyoxal-glycated proteins, and releases repaired proteins and lactate or glycolate, respectively. Deglycates cysteine, arginine and lysine residues in proteins, and thus reactivates these proteins by reversing glycation by glyoxals. Acts on early glycation intermediates (hemithioacetals and aminocarbinols), preventing the formation of advanced glycation endproducts (AGE) that cause irreversible damage. Also displays proteolytic activity. This chain is Deglycase PYRAB04690, found in Pyrococcus abyssi (strain GE5 / Orsay).